A 408-amino-acid chain; its full sequence is UDP-N-acetylglucosamine--dolichyl-phosphate N-acetylglucosaminephosphotransferase (408 aa).

The Lumenal portion of the chain corresponds to 1 to 10; sequence MWAFPELPLP. A helical membrane pass occupies residues 11 to 38; the sequence is LLVNLFGSLLGFVATVTLIPAFRSHFIA. The Cytoplasmic segment spans residues 39 to 58; it reads ARLCGQDLNKLSRQQIPESQ. UDP-N-acetyl-alpha-D-glucosamine-binding positions include 44–46 and glutamate 56; that span reads QDL. A helical membrane pass occupies residues 59–78; it reads GVICGAVFLIILFCFIPFPF. Residues 79–91 are Lumenal-facing; sequence LNCFVEEQCKAFP. A helical transmembrane segment spans residues 92–118; it reads HHEFVALIGALLAICCMIFLGFADDVL. Residues 119-121 lie on the Cytoplasmic side of the membrane; it reads NLR. Residues 122 to 143 form a helical membrane-spanning segment; that stretch reads WRHKLLLPTAASLPLLMVYFTN. A dolichyl phosphate-binding site is contributed by lysine 125. Residues 144-166 lie on the Lumenal side of the membrane; the sequence is FGNTTIVVPKPFRWILGLHLDLG. An N-linked (GlcNAc...) asparagine glycan is attached at asparagine 146. The helical transmembrane segment at 167–186 threads the bilayer; sequence ILYYVYMGLLAVFCTNAINI. 178 to 186 is a binding site for dolichyl phosphate; the sequence is VFCTNAINI. Asparagine 185 serves as a coordination point for Mg(2+). The Cytoplasmic segment spans residues 187–192; it reads LAGING. Asparagine 191 serves as a coordination point for UDP-N-acetyl-alpha-D-glucosamine. A helical transmembrane segment spans residues 193 to 213; the sequence is LEAGQSLVISASIIVFNLVEL. Residues 214-218 lie on the Lumenal side of the membrane; sequence EGDYR. A helical membrane pass occupies residues 219 to 242; sequence DDHVFSLYFMIPFFFTTLGLLYHN. The Cytoplasmic portion of the chain corresponds to 243-250; that stretch reads WYPSQVFV. Residues 251 to 269 form a helical membrane-spanning segment; sequence GDTFCYFAGMTFAVVGILG. Aspartate 252 is a Mg(2+) binding site. The Lumenal portion of the chain corresponds to 270-271; sequence HF. The chain crosses the membrane as a helical span at residues 272 to 293; that stretch reads SKTMLLFFIPQVFNFLYSLPQL. The Cytoplasmic segment spans residues 294–375; it reads LHAIPCPRHR…LLLKIFGPIH (82 aa). 301–303 is a binding site for UDP-N-acetyl-alpha-D-glucosamine; that stretch reads RHR. Residues 376–400 traverse the membrane as a helical segment; it reads ERNLTLLLLLLQILSSAVTFSIRYQ. Over 401-408 the chain is Lumenal; it reads LVRLFYDV.

Belongs to the glycosyltransferase 4 family. In terms of assembly, homodimer. Mg(2+) is required as a cofactor.

Its subcellular location is the endoplasmic reticulum membrane. It carries out the reaction a di-trans,poly-cis-dolichyl phosphate + UDP-N-acetyl-alpha-D-glucosamine = an N-acetyl-alpha-D-glucosaminyl-diphospho-di-trans,poly-cis-dolichol + UMP. The protein operates within protein modification; protein glycosylation. With respect to regulation, inhibited by natural nucleoside antibiotic tunicamycin, which acts as a structural analog and competitor of UDP-GlcNAc. Functionally, UDP-N-acetylglucosamine--dolichyl-phosphate N-acetylglucosaminephosphotransferase that operates in the biosynthetic pathway of dolichol-linked oligosaccharides, the glycan precursors employed in protein asparagine (N)-glycosylation. The assembly of dolichol-linked oligosaccharides begins on the cytosolic side of the endoplasmic reticulum membrane and finishes in its lumen. The sequential addition of sugars to dolichol pyrophosphate produces dolichol-linked oligosaccharides containing fourteen sugars, including two GlcNAcs, nine mannoses and three glucoses. Once assembled, the oligosaccharide is transferred from the lipid to nascent proteins by oligosaccharyltransferases. Catalyzes the initial step of dolichol-linked oligosaccharide biosynthesis, transfering GlcNAc-1-P from cytosolic UDP-GlcNAc onto the carrier lipid dolichyl phosphate (P-dolichol), yielding GlcNAc-P-P-dolichol embedded in the cytoplasmic leaflet of the endoplasmic reticulum membrane. The sequence is that of UDP-N-acetylglucosamine--dolichyl-phosphate N-acetylglucosaminephosphotransferase (DPAGT1) from Cricetulus griseus (Chinese hamster).